We begin with the raw amino-acid sequence, 521 residues long: Chromaffin granule amine transporter (521 aa).

Residues Met1–Lys21 lie on the Cytoplasmic side of the membrane. A helical transmembrane segment spans residues Leu22–Val42. The Lumenal, vesicle portion of the chain corresponds to Pro43–Arg135. 3 N-linked (GlcNAc...) asparagine glycosylation sites follow: Asn58, Asn87, and Asn104. Residues Ile136–Gly155 form a helical membrane-spanning segment. At Pro156–His164 the chain is on the cytoplasmic side. The chain crosses the membrane as a helical span at residues Ile165–Gly185. The Lumenal, vesicle segment spans residues Thr186–Arg194. Residues Thr195–Val215 form a helical membrane-spanning segment. Residues Tyr216–Arg224 are Cytoplasmic-facing. Residues Ala225 to Met247 form a helical membrane-spanning segment. The Lumenal, vesicle segment spans residues Tyr248–Lys253. The helical transmembrane segment at Ser254–Trp276 threads the bilayer. Over Pro277–Asp296 the chain is Cytoplasmic. A helical membrane pass occupies residues Pro297–Leu316. At Glu317–Glu332 the chain is on the lumenal, vesicle side. The helical transmembrane segment at Trp333 to Ala357 threads the bilayer. At Asn358–Arg362 the chain is on the cytoplasmic side. A helical transmembrane segment spans residues Trp363–Ala383. The Lumenal, vesicle segment spans residues His384 to Ala394. Residues Gly395–Val415 form a helical membrane-spanning segment. The Cytoplasmic portion of the chain corresponds to Asp416–His419. The chain crosses the membrane as a helical span at residues Thr420–Ile440. At Gly441 to Gly445 the chain is on the lumenal, vesicle side. A helical transmembrane segment spans residues Gly446–Ile467. Over Tyr468–Glu521 the chain is Cytoplasmic.

The protein belongs to the major facilitator superfamily. Vesicular transporter family. Adrenal gland.

The protein resides in the cytoplasmic vesicle. The protein localises to the secretory vesicle membrane. Its subcellular location is the secretory vesicle. It is found in the synaptic vesicle membrane. The enzyme catalyses serotonin(in) + 2 H(+)(out) = serotonin(out) + 2 H(+)(in). It catalyses the reaction (R)-noradrenaline(in) + 2 H(+)(out) = (R)-noradrenaline(out) + 2 H(+)(in). The catalysed reaction is dopamine(in) + 2 H(+)(out) = dopamine(out) + 2 H(+)(in). Its activity is regulated as follows. Strongly inhibited by reserpine, ketanserin and methamphetamine. Also inhibited weakly by tetrabenazine. Electrogenic antiporter that exchanges one cationic monoamine with two intravesicular protons across the membrane of secretory and synaptic vesicles. Uses the electrochemical proton gradient established by the V-type proton-pump ATPase to accumulate high concentrations of monoamines inside the vesicles prior to their release via exocytosis. Transports catecholamines and indolamines with higher affinity for serotonin. Regulates the transvesicular monoaminergic gradient that determines the quantal size. Mediates presynaptic monoaminergic vesicle transport in the amygdala and prefrontal brain regions related with emotion processing in response to environmental stimuli. The polypeptide is Chromaffin granule amine transporter (Slc18a1) (Rattus norvegicus (Rat)).